We begin with the raw amino-acid sequence, 509 residues long: Photosystem II CP47 reaction center protein (509 aa).

Helical transmembrane passes span 21–36, 101–115, 140–156, 203–218, 237–252, and 457–472; these read SVHI…WAGS, IVFS…IWHW, GIHL…FGAF, IAAG…FHLS, VLSS…AFVV, and SFAL…HGAR.

Belongs to the PsbB/PsbC family. PsbB subfamily. In terms of assembly, PSII is composed of 1 copy each of membrane proteins PsbA, PsbB, PsbC, PsbD, PsbE, PsbF, PsbH, PsbI, PsbJ, PsbK, PsbL, PsbM, PsbT, PsbX, PsbY, PsbZ, Psb30/Ycf12, at least 3 peripheral proteins of the oxygen-evolving complex and a large number of cofactors. It forms dimeric complexes. Requires Binds multiple chlorophylls. PSII binds additional chlorophylls, carotenoids and specific lipids. as cofactor.

Its subcellular location is the plastid. The protein resides in the chloroplast thylakoid membrane. One of the components of the core complex of photosystem II (PSII). It binds chlorophyll and helps catalyze the primary light-induced photochemical processes of PSII. PSII is a light-driven water:plastoquinone oxidoreductase, using light energy to abstract electrons from H(2)O, generating O(2) and a proton gradient subsequently used for ATP formation. This is Photosystem II CP47 reaction center protein from Cicer arietinum (Chickpea).